The chain runs to 1074 residues: Semaphorin-5A (1074 aa).

A signal peptide spans 1 to 22 (MKGACILAWLFSSLGVWRLARP). A Sema domain is found at 35–484 (HPVVSYKEIG…LQEHVVKIPL (450 aa)). 2 disulfides stabilise this stretch: cysteine 104-cysteine 114 and cysteine 131-cysteine 140. 4 N-linked (GlcNAc...) asparagine glycosylation sites follow: asparagine 147, asparagine 168, asparagine 227, and asparagine 277. 2 disulfide bridges follow: cysteine 254–cysteine 357 and cysteine 278–cysteine 320. Asparagine 323 and asparagine 367 each carry an N-linked (GlcNAc...) asparagine glycan. In terms of domain architecture, PSI spans 486-533 (RCHFHQTRGACIGAQDPYCGWDAVMKKCTSLEESLSMTQWDQSVPTCP). N-linked (GlcNAc...) asparagine glycans are attached at residues asparagine 536 and asparagine 591. TSP type-1 domains lie at 540 to 593 (DGSF…TNCS), 595 to 651 (NGGW…LLCP), and 653 to 702 (HVFW…NACP). 6 cysteine pairs are disulfide-bonded: cysteine 607/cysteine 644, cysteine 611/cysteine 650, cysteine 622/cysteine 634, cysteine 665/cysteine 696, cysteine 669/cysteine 701, and cysteine 680/cysteine 686. Asparagine 717 is a glycosylation site (N-linked (GlcNAc...) asparagine). TSP type-1 domains follow at residues 784 to 839 (NGAW…LPCP), 841 to 896 (DGVW…QTCP), and 897 to 944 (ENWS…VFDS). 6 disulfide bridges follow: cysteine 796-cysteine 833, cysteine 800-cysteine 838, cysteine 811-cysteine 823, cysteine 853-cysteine 890, cysteine 857-cysteine 895, and cysteine 868-cysteine 880. Asparagine 898 and asparagine 933 each carry an N-linked (GlcNAc...) asparagine glycan. Residues 969 to 989 (FHMMAVGLSSSILGCLLTLLV) form a helical membrane-spanning segment. Residue asparagine 1015 is glycosylated (N-linked (GlcNAc...) asparagine).

Binds PLXNB3.

Its subcellular location is the membrane. In terms of biological role, bifunctional axonal guidance cue regulated by sulfated proteoglycans; attractive effects result from interactions with heparan sulfate proteoglycans (HSPGs), while the inhibitory effects depend on interactions with chondroitin sulfate proteoglycans (CSPGs). Ligand for receptor PLXNB3. In glioma cells, SEMA5A stimulation of PLXNB3 results in the disassembly of F-actin stress fibers, disruption of focal adhesions and cellular collapse as well as inhibition of cell migration and invasion through ARHGDIA-mediated inactivation of RAC1. May promote angiogenesis by increasing endothelial cell proliferation and migration and inhibiting apoptosis. The sequence is that of Semaphorin-5A (Sema5a) from Rattus norvegicus (Rat).